The primary structure comprises 113 residues: Large ribosomal subunit protein uL22 (113 aa).

It belongs to the universal ribosomal protein uL22 family. As to quaternary structure, part of the 50S ribosomal subunit.

Functionally, this protein binds specifically to 23S rRNA; its binding is stimulated by other ribosomal proteins, e.g. L4, L17, and L20. It is important during the early stages of 50S assembly. It makes multiple contacts with different domains of the 23S rRNA in the assembled 50S subunit and ribosome. In terms of biological role, the globular domain of the protein is located near the polypeptide exit tunnel on the outside of the subunit, while an extended beta-hairpin is found that lines the wall of the exit tunnel in the center of the 70S ribosome. The sequence is that of Large ribosomal subunit protein uL22 from Bacillus cereus (strain ATCC 10987 / NRS 248).